Consider the following 232-residue polypeptide: Ribose-5-phosphate isomerase A (232 aa).

Residues 28-31 (TGST), 83-86 (DGAD), and 96-99 (KGGG) each bind substrate. Glu105 serves as the catalytic Proton acceptor. Lys123 is a binding site for substrate.

This sequence belongs to the ribose 5-phosphate isomerase family. In terms of assembly, homodimer.

It carries out the reaction aldehydo-D-ribose 5-phosphate = D-ribulose 5-phosphate. Its pathway is carbohydrate degradation; pentose phosphate pathway; D-ribose 5-phosphate from D-ribulose 5-phosphate (non-oxidative stage): step 1/1. In terms of biological role, catalyzes the reversible conversion of ribose-5-phosphate to ribulose 5-phosphate. The polypeptide is Ribose-5-phosphate isomerase A (Rhizobium leguminosarum bv. trifolii (strain WSM2304)).